Consider the following 374-residue polypeptide: Alanine racemase (374 aa).

Catalysis depends on Lys-35, which acts as the Proton acceptor; specific for D-alanine. Lys-35 carries the N6-(pyridoxal phosphate)lysine modification. Arg-133 is a binding site for substrate. The active-site Proton acceptor; specific for L-alanine is the Tyr-264. A substrate-binding site is contributed by Met-312.

This sequence belongs to the alanine racemase family. It depends on pyridoxal 5'-phosphate as a cofactor.

The enzyme catalyses L-alanine = D-alanine. It functions in the pathway amino-acid biosynthesis; D-alanine biosynthesis; D-alanine from L-alanine: step 1/1. Functionally, catalyzes the interconversion of L-alanine and D-alanine. May also act on other amino acids. This is Alanine racemase (alr) from Thermobifida fusca (strain YX).